The following is a 109-amino-acid chain: ATP-dependent Clp protease adapter protein ClpS (109 aa).

It belongs to the ClpS family. As to quaternary structure, binds to the N-terminal domain of the chaperone ClpA.

Involved in the modulation of the specificity of the ClpAP-mediated ATP-dependent protein degradation. The protein is ATP-dependent Clp protease adapter protein ClpS of Lawsonia intracellularis (strain PHE/MN1-00).